We begin with the raw amino-acid sequence, 193 residues long: Homeobox protein HD-12 (193 aa).

The segment at residues 123-185 (SVIRRINFPK…NARRRILPFM (63 aa)) is a DNA-binding region (homeobox; TALE-type).

This sequence belongs to the TALE/KNOX homeobox family.

Its subcellular location is the nucleus. The sequence is that of Homeobox protein HD-12 (HD-12) from Encephalitozoon cuniculi (strain GB-M1) (Microsporidian parasite).